The primary structure comprises 224 residues: Response regulator protein GraR (224 aa).

In terms of domain architecture, Response regulatory spans Q2–Y115. D51 carries the post-translational modification 4-aspartylphosphate. The ompR/PhoB-type DNA-binding region spans K126 to E224. Phosphothreonine is present on residues T128, T130, and T149.

Interacts with GraX. Phosphorylated by GraS. Phosphorylated by Stk1; phosphorylation increases the DNA-binding activity of GraR.

The protein resides in the cytoplasm. Functionally, member of the two-component regulatory system GraR/GraS involved in resistance against cationic antimicrobial peptides (CAMPs). Upon phosphorylation by GraS, functions as a transcription regulator by direct binding to promoter regions of target genes such as adhesins, exoproteins, transporters, toxins, and proteins involved in cell wall synthesis. Down-regulates the expression of many genes involved in RNA and amino acid synthesis or glycolysis. The sequence is that of Response regulator protein GraR (graR) from Staphylococcus aureus (strain bovine RF122 / ET3-1).